We begin with the raw amino-acid sequence, 96 residues long: uncharacterized protein (96 aa).

The signal sequence occupies residues 1 to 30 (MLILSVFCAVFYAFLTAIVANFSLKTLAIG). Residues 31 to 54 (ATFVKSHLKSNPIPYGDLVADSLD) lie on the Extracellular side of the membrane. The helical transmembrane segment at 55-75 (FGNITPTVTLLFAILIAVLAL) threads the bilayer. The Cytoplasmic portion of the chain corresponds to 76–96 (KCEFSCSTSAPAGQASGRKVK).

The protein resides in the membrane. This is an uncharacterized protein from Dictyostelium discoideum (Social amoeba).